The following is a 271-amino-acid chain: Acetyl-coenzyme A carboxylase carboxyl transferase subunit alpha (271 aa).

The CoA carboxyltransferase C-terminal domain maps to M1–E247.

This sequence belongs to the AccA family. As to quaternary structure, acetyl-CoA carboxylase is a heterohexamer composed of biotin carboxyl carrier protein (AccB), biotin carboxylase (AccC) and two subunits each of ACCase subunit alpha (AccA) and ACCase subunit beta (AccD).

It is found in the cytoplasm. It carries out the reaction N(6)-carboxybiotinyl-L-lysyl-[protein] + acetyl-CoA = N(6)-biotinyl-L-lysyl-[protein] + malonyl-CoA. The protein operates within lipid metabolism; malonyl-CoA biosynthesis; malonyl-CoA from acetyl-CoA: step 1/1. In terms of biological role, component of the acetyl coenzyme A carboxylase (ACC) complex. First, biotin carboxylase catalyzes the carboxylation of biotin on its carrier protein (BCCP) and then the CO(2) group is transferred by the carboxyltransferase to acetyl-CoA to form malonyl-CoA. This is Acetyl-coenzyme A carboxylase carboxyl transferase subunit alpha from Clostridium perfringens (strain SM101 / Type A).